A 423-amino-acid chain; its full sequence is Glucose-1-phosphate adenylyltransferase (423 aa).

Alpha-D-glucose 1-phosphate-binding positions include Y98, G163, E178–K179, and S189.

The protein belongs to the bacterial/plant glucose-1-phosphate adenylyltransferase family. In terms of assembly, homotetramer.

The enzyme catalyses alpha-D-glucose 1-phosphate + ATP + H(+) = ADP-alpha-D-glucose + diphosphate. It participates in glycan biosynthesis; glycogen biosynthesis. Its function is as follows. Involved in the biosynthesis of ADP-glucose, a building block required for the elongation reactions to produce glycogen. Catalyzes the reaction between ATP and alpha-D-glucose 1-phosphate (G1P) to produce pyrophosphate and ADP-Glc. This is Glucose-1-phosphate adenylyltransferase from Thermotoga neapolitana (strain ATCC 49049 / DSM 4359 / NBRC 107923 / NS-E).